The sequence spans 90 residues: uncharacterized protein (90 aa).

This is an uncharacterized protein from Methanocaldococcus jannaschii (strain ATCC 43067 / DSM 2661 / JAL-1 / JCM 10045 / NBRC 100440) (Methanococcus jannaschii).